A 430-amino-acid polypeptide reads, in one-letter code: Oleandomycin glycosyltransferase (430 aa).

The segment at 385 to 430 (GGTRRAADLIEAELPARHERQEPVGDRPNVGDRPAGVRSDRQRSAL) is disordered. Residues 386–409 (GTRRAADLIEAELPARHERQEPVG) are compositionally biased toward basic and acidic residues.

It belongs to the UDP-glycosyltransferase family.

In terms of biological role, specifically inactivates oleandomycin via 2'-O-glycosylation using UDP-glucose. This Streptomyces antibioticus protein is Oleandomycin glycosyltransferase (oleD).